The sequence spans 127 residues: Ribonuclease VapC6 (127 aa).

The PINc domain maps to 26–120; it reads EPQRAEFCRS…ERHLPDIRVR (95 aa). Aspartate 86 is a binding site for Mg(2+).

It belongs to the PINc/VapC protein family. Mg(2+) is required as a cofactor.

Its function is as follows. Toxic component of a type II toxin-antitoxin (TA) system. An RNase. The cognate antitoxin is VapB6. This Mycobacterium tuberculosis (strain CDC 1551 / Oshkosh) protein is Ribonuclease VapC6.